The following is a 212-amino-acid chain: Large ribosomal subunit protein uL1 (212 aa).

This sequence belongs to the universal ribosomal protein uL1 family. As to quaternary structure, part of the 50S ribosomal subunit.

In terms of biological role, binds directly to 23S rRNA. Probably involved in E site tRNA release. Its function is as follows. Protein L1 is also a translational repressor protein, it controls the translation of its operon by binding to its mRNA. This chain is Large ribosomal subunit protein uL1, found in Haloarcula marismortui (strain ATCC 43049 / DSM 3752 / JCM 8966 / VKM B-1809) (Halobacterium marismortui).